The chain runs to 224 residues: ATP-dependent dethiobiotin synthetase BioD (224 aa).

An ATP-binding site is contributed by 14–19 (GIGKTV). Thr-18 is a Mg(2+) binding site. Lys-39 is an active-site residue. Ser-43 serves as a coordination point for substrate. ATP is bound by residues Asp-56, 117-120 (EGVG), and 177-178 (NE). 2 residues coordinate Mg(2+): Asp-56 and Glu-117.

Belongs to the dethiobiotin synthetase family. In terms of assembly, homodimer. Mg(2+) is required as a cofactor.

The protein resides in the cytoplasm. The enzyme catalyses (7R,8S)-7,8-diammoniononanoate + CO2 + ATP = (4R,5S)-dethiobiotin + ADP + phosphate + 3 H(+). It participates in cofactor biosynthesis; biotin biosynthesis; biotin from 7,8-diaminononanoate: step 1/2. In terms of biological role, catalyzes a mechanistically unusual reaction, the ATP-dependent insertion of CO2 between the N7 and N8 nitrogen atoms of 7,8-diaminopelargonic acid (DAPA, also called 7,8-diammoniononanoate) to form a ureido ring. This chain is ATP-dependent dethiobiotin synthetase BioD, found in Xanthomonas campestris pv. campestris (strain ATCC 33913 / DSM 3586 / NCPPB 528 / LMG 568 / P 25).